The following is a 583-amino-acid chain: CD166 antigen (583 aa).

Positions Met-1 to Gly-27 are cleaved as a signal peptide. 2 Ig-like V-type domains span residues Trp-28–Asn-120 and Pro-125–Tyr-234. Residues Trp-28 to Lys-527 lie on the Extracellular side of the membrane. Cystine bridges form between Cys-43/Cys-113 and Cys-157/Cys-220. N-linked (GlcNAc...) asparagine glycosylation is found at Asn-95, Asn-167, Asn-265, Asn-306, Asn-361, Asn-457, Asn-480, and Asn-499. Ig-like C2-type domains follow at residues Pro-245–Thr-328, Asp-333–Thr-409, and Pro-416–Ser-501. 3 cysteine pairs are disulfide-bonded: Cys-270–Cys-313, Cys-354–Cys-392, and Cys-435–Cys-485. The chain crosses the membrane as a helical span at residues Leu-528 to Leu-549. The Cytoplasmic portion of the chain corresponds to Tyr-550 to Ala-583. The segment at Asn-562–Ala-583 is disordered. Positions Glu-569–Ala-583 are enriched in basic and acidic residues.

In terms of assembly, homodimer. Interacts (via extracellular domain) with CD6 (via extracellular domain). Homodimerization and interaction with CD6 involve the same region and cannot occur simultaneously. The affinity for CD6 is much higher than the affinity for self-association. Interacts (via glycosylated extracellular domain) with LGALS1 and LGALS3. Interaction with LGALS1 or LGALS3 inhibits interaction with CD6. Post-translationally, glycosylated. Detected on brain motor neurons, in differentiating retinal ganglion cells and in adult retina. Detected on leukocytes and on lymphatic endothelial cells. Detected in spleen B cells and T-cells (at protein level). Detected in adult brain and embryonic spinal cord. Expressed at high levels in the brain, and lung, and at lower levels in the liver, and the kidney, as well as by activated leukocytes.

The protein resides in the cell membrane. The protein localises to the cell projection. It is found in the axon. Its subcellular location is the dendrite. Functionally, cell adhesion molecule that mediates both heterotypic cell-cell contacts via its interaction with CD6, as well as homotypic cell-cell contacts. Promotes T-cell activation and proliferation via its interactions with CD6. Contributes to the formation and maturation of the immunological synapse via its interactions with CD6. Mediates homotypic interactions with cells that express ALCAM. Mediates attachment of dendritic cells onto endothelial cells via homotypic interaction. Inhibits endothelial cell migration and promotes endothelial tube formation via homotypic interactions. Required for normal organization of the lymph vessel network. Required for normal hematopoietic stem cell engraftment in the bone marrow. Plays a role in hematopoiesis; required for normal numbers of hematopoietic stem cells in bone marrow. Promotes in vitro osteoblast proliferation and differentiation. Promotes neurite extension, axon growth and axon guidance; axons grow preferentially on surfaces that contain ALCAM. Mediates outgrowth and pathfinding for retinal ganglion cell axons. This is CD166 antigen (Alcam) from Mus musculus (Mouse).